The chain runs to 261 residues: Probable membrane transporter protein ORF9 (261 aa).

8 helical membrane-spanning segments follow: residues L8–G28, G29–G49, L78–V98, G100–L120, V133–G151, V152–F171, V189–M209, and I231–P251.

The protein belongs to the 4-toluene sulfonate uptake permease (TSUP) (TC 2.A.102) family.

The protein localises to the cell membrane. The sequence is that of Probable membrane transporter protein ORF9 from Sinorhizobium sp.